The following is a 129-amino-acid chain: Large ribosomal subunit protein bL20 (129 aa).

The protein belongs to the bacterial ribosomal protein bL20 family.

Functionally, binds directly to 23S ribosomal RNA and is necessary for the in vitro assembly process of the 50S ribosomal subunit. It is not involved in the protein synthesizing functions of that subunit. The protein is Large ribosomal subunit protein bL20 of Mycobacterium marinum (strain ATCC BAA-535 / M).